The primary structure comprises 286 residues: 4-diphosphocytidyl-2-C-methyl-D-erythritol kinase (286 aa).

The active site involves Lys8. 92–102 (PVSAGLAGGST) is an ATP binding site. Residue Asp134 is part of the active site.

It belongs to the GHMP kinase family. IspE subfamily.

It carries out the reaction 4-CDP-2-C-methyl-D-erythritol + ATP = 4-CDP-2-C-methyl-D-erythritol 2-phosphate + ADP + H(+). The protein operates within isoprenoid biosynthesis; isopentenyl diphosphate biosynthesis via DXP pathway; isopentenyl diphosphate from 1-deoxy-D-xylulose 5-phosphate: step 3/6. Catalyzes the phosphorylation of the position 2 hydroxy group of 4-diphosphocytidyl-2C-methyl-D-erythritol. The sequence is that of 4-diphosphocytidyl-2-C-methyl-D-erythritol kinase from Caldicellulosiruptor bescii (strain ATCC BAA-1888 / DSM 6725 / KCTC 15123 / Z-1320) (Anaerocellum thermophilum).